We begin with the raw amino-acid sequence, 412 residues long: Allantoate amidohydrolase (412 aa).

Zn(2+) is bound by residues histidine 84, aspartate 95, glutamate 130, and histidine 193. Allantoate is bound by residues arginine 218, asparagine 278, and arginine 291. Histidine 385 lines the Zn(2+) pocket.

Belongs to the peptidase M20 family. In terms of assembly, homodimer. Zn(2+) is required as a cofactor.

It localises to the cytoplasm. The catalysed reaction is allantoate + H2O + 2 H(+) = (S)-2-ureidoglycine + NH4(+) + CO2. It participates in nitrogen metabolism; (S)-allantoin degradation. Involved in the anaerobic nitrogen utilization via the assimilation of allantoin. Catalyzes specifically the hydrolysis of allantoate to yield CO2, NH3 and S-ureidoglycine, which is unstable and readily undergoes a second deamination by S-ureidoglycine aminohydrolase AllE to yield S-ureidoglycolate and NH3. This chain is Allantoate amidohydrolase, found in Bacillus subtilis (strain 168).